We begin with the raw amino-acid sequence, 258 residues long: Imidazole glycerol phosphate synthase subunit HisF (258 aa).

Active-site residues include aspartate 11 and aspartate 130.

This sequence belongs to the HisA/HisF family. In terms of assembly, heterodimer of HisH and HisF.

The protein localises to the cytoplasm. The catalysed reaction is 5-[(5-phospho-1-deoxy-D-ribulos-1-ylimino)methylamino]-1-(5-phospho-beta-D-ribosyl)imidazole-4-carboxamide + L-glutamine = D-erythro-1-(imidazol-4-yl)glycerol 3-phosphate + 5-amino-1-(5-phospho-beta-D-ribosyl)imidazole-4-carboxamide + L-glutamate + H(+). The protein operates within amino-acid biosynthesis; L-histidine biosynthesis; L-histidine from 5-phospho-alpha-D-ribose 1-diphosphate: step 5/9. Functionally, IGPS catalyzes the conversion of PRFAR and glutamine to IGP, AICAR and glutamate. The HisF subunit catalyzes the cyclization activity that produces IGP and AICAR from PRFAR using the ammonia provided by the HisH subunit. This Nitrobacter hamburgensis (strain DSM 10229 / NCIMB 13809 / X14) protein is Imidazole glycerol phosphate synthase subunit HisF.